The sequence spans 650 residues: Chaperone protein DnaK (650 aa).

T200 carries the post-translational modification Phosphothreonine; by autocatalysis. Over residues 612-636 (QQAGAAGAAGAAEGAAHAGGAQQAA) the composition is skewed to low complexity. The disordered stretch occupies residues 612-650 (QQAGAAGAAGAAEGAAHAGGAQQAADDVVDAEFKEVKKD).

The protein belongs to the heat shock protein 70 family.

Functionally, acts as a chaperone. This chain is Chaperone protein DnaK, found in Burkholderia ambifaria (strain ATCC BAA-244 / DSM 16087 / CCUG 44356 / LMG 19182 / AMMD) (Burkholderia cepacia (strain AMMD)).